Consider the following 475-residue polypeptide: U3 small nucleolar RNA-interacting protein 2 (475 aa).

Residues 1-75 form a disordered region; the sequence is MSATAAARKR…EEEEELEETA (75 aa). A Nuclear localization signal motif is present at residues 8–40; it reads RKRGKPASGAGAGAGAGKRRRKADSAGDRGKSK. R10 carries the post-translational modification Omega-N-methylarginine. N6-acetyllysine is present on residues K12 and K25. Residues S50, S51, S53, and S57 each carry the phosphoserine modification. The span at 65–74 shows a compositional bias: acidic residues; sequence EEEEEELEET. K113 participates in a covalent cross-link: Glycyl lysine isopeptide (Lys-Gly) (interchain with G-Cter in SUMO2). WD repeat units follow at residues 144–183, 197–236, 239–278, 281–320, 322–360, 374–413, and 419–460; these read GHQL…KLHV, GHSS…HLYT, GHRD…YVET, GHQD…QLVF, GHQG…PLAL, EQPF…RQLD, and PLVG…NSVC.

It belongs to the WD repeat RRP9 family. In terms of assembly, interacts specifically with the U3 small nucleolar RNA (U3 snoRNA). Binds a sub-fragment of the U3 snoRNA surrounding the B/C motif (3UBC). This association with the U3BC RNA is dependent on the binding of a protein called 15.5K to the box B/C motif. The association of the protein with the U3BC RNA was found to be also dependent on a conserved RNA structure that flanks the box B/C motif. Part of the small subunit (SSU) processome, composed of more than 70 proteins and the RNA chaperone small nucleolar RNA (snoRNA) U3. Post-translationally, acetylation at Lys-12 and Lys-25 by KAT2B/PCAF under stress impairs pre-rRNA processing. Deacetylation by SIRT7 enhances RRP9-binding to U3 snoRNA, which is a prerequisite for pre-rRNA processing.

Its subcellular location is the nucleus. It localises to the nucleolus. In terms of biological role, component of a nucleolar small nuclear ribonucleoprotein particle (snoRNP) thought to participate in the processing and modification of pre-ribosomal RNA (pre-rRNA). Part of the small subunit (SSU) processome, first precursor of the small eukaryotic ribosomal subunit. During the assembly of the SSU processome in the nucleolus, many ribosome biogenesis factors, an RNA chaperone and ribosomal proteins associate with the nascent pre-rRNA and work in concert to generate RNA folding, modifications, rearrangements and cleavage as well as targeted degradation of pre-ribosomal RNA by the RNA exosome. In Homo sapiens (Human), this protein is U3 small nucleolar RNA-interacting protein 2.